The following is a 102-amino-acid chain: Small ribosomal subunit protein uS10 (102 aa).

This sequence belongs to the universal ribosomal protein uS10 family. Part of the 30S ribosomal subunit.

In terms of biological role, involved in the binding of tRNA to the ribosomes. The polypeptide is Small ribosomal subunit protein uS10 (Enterococcus faecalis (strain ATCC 700802 / V583)).